A 318-amino-acid polypeptide reads, in one-letter code: NLP effector protein 9 (318 aa).

The N-terminal stretch at 1-19 (MRLFAFLWSSVAFLSTVQA) is a signal peptide. The segment covering 24–35 (TASQTQDDSSTP) has biased composition (low complexity). Disordered stretches follow at residues 24 to 43 (TASQ…PDKY) and 50 to 93 (LRTK…PAPT). The segment covering 55-65 (PMATPNRTIMP) has biased composition (polar residues). Asn60 carries an N-linked (GlcNAc...) asparagine glycan. Over residues 73–93 (PEPPTPEPTYLPTLSPTPAPT) the composition is skewed to pro residues. The short motif at 185–195 (AIMYSWYFPKD) is the Conserved undecapeptide motif I element. Positions 202-208 (GHRHDWE) match the Hepta-peptide GHRHDWE motif II motif.

Belongs to the Necrosis inducing protein (NPP1) family.

It localises to the secreted. Functionally, secreted effector that contributes to virulence during infection by P.capsici. Induces distinct chlorosis at 3 days after inoculation of host C.annuum leaves, and all the chlorotic areas gradually turn brown and become moderately necrotic at 7 days after inoculation. Caused only small necrotic areas at 7 days after non-host N.benthamiana leaves infection. The sequence is that of NLP effector protein 9 from Phytophthora capsici.